Reading from the N-terminus, the 233-residue chain is Octanoyltransferase (233 aa).

One can recognise a BPL/LPL catalytic domain in the interval 36–211 (DTTPDEIWLV…EFTRQLGYPT (176 aa)). Substrate is bound by residues 75–82 (RGGQVTYH), 142–144 (SLG), and 155–157 (GLA). The Acyl-thioester intermediate role is filled by cysteine 173.

It belongs to the LipB family.

It is found in the cytoplasm. The catalysed reaction is octanoyl-[ACP] + L-lysyl-[protein] = N(6)-octanoyl-L-lysyl-[protein] + holo-[ACP] + H(+). It participates in protein modification; protein lipoylation via endogenous pathway; protein N(6)-(lipoyl)lysine from octanoyl-[acyl-carrier-protein]: step 1/2. Functionally, catalyzes the transfer of endogenously produced octanoic acid from octanoyl-acyl-carrier-protein onto the lipoyl domains of lipoate-dependent enzymes. Lipoyl-ACP can also act as a substrate although octanoyl-ACP is likely to be the physiological substrate. This Yersinia pseudotuberculosis serotype O:3 (strain YPIII) protein is Octanoyltransferase.